The sequence spans 229 residues: Potassium/proton antiporter CemA (229 aa).

The next 2 helical transmembrane spans lie at 7-27 (LASL…SISF) and 106-126 (IISH…YFIL).

It belongs to the CemA family.

The protein localises to the plastid. The protein resides in the chloroplast inner membrane. It carries out the reaction K(+)(in) + H(+)(out) = K(+)(out) + H(+)(in). In terms of biological role, contributes to K(+)/H(+) antiport activity by supporting proton efflux to control proton extrusion and homeostasis in chloroplasts in a light-dependent manner to modulate photosynthesis. Prevents excessive induction of non-photochemical quenching (NPQ) under continuous-light conditions. Indirectly promotes efficient inorganic carbon uptake into chloroplasts. This is Potassium/proton antiporter CemA from Cycas taitungensis (Prince sago).